A 438-amino-acid chain; its full sequence is Myosin light chain kinase, smooth muscle (438 aa).

One can recognise a Protein kinase domain in the interval 1–241; the sequence is FRLVEKKTGK…CTQCLQHPWL (241 aa). An ATP-binding site is contributed by K15. Position 97 is a phosphotyrosine; by ABL1 (Y97). Catalysis depends on D107, which acts as the Proton acceptor. Residue Y157 is modified to Phosphotyrosine; by ABL1. Residues 233-296 form a calmodulin-binding region; sequence TQCLQHPWLX…SGLSGRKSST (64 aa). Residues S281, S282, S294, S295, and S298 each carry the phosphoserine modification. A telokin region spans residues 283–438; it reads MAMISGLSGR…GEGGEEEEEE (156 aa). A disordered region spans residues 289–309; that stretch reads LSGRKSSTGSPTSPLNAEKLE. A compositionally biased stretch (polar residues) spans 292–303; it reads RKSSTGSPTSPL. Phosphothreonine is present on T300. Residue S301 is modified to Phosphoserine. An Ig-like C2-type domain is found at 331-420; that stretch reads PYFSKTIRDL…GEATCTAELI (90 aa). A disulfide bridge connects residues C352 and C404.

It belongs to the protein kinase superfamily. CAMK Ser/Thr protein kinase family. In terms of assembly, all isoforms including Telokin bind calmodulin. Interacts with SVIL. Interacts with CTTN; this interaction is reduced during thrombin-induced endothelial cell (EC) contraction but is promoted by the barrier-protective agonist sphingosine 1-phosphate (S1P) within lamellipodia. A complex made of ABL1, CTTN and MYLK regulates cortical actin-based cytoskeletal rearrangement critical to sphingosine 1-phosphate (S1P)-mediated endothelial cell (EC) barrier enhancement. Binds to NAA10/ARD1 and PTK2B/PYK2. Mg(2+) is required as a cofactor. Ca(2+) serves as cofactor. Post-translationally, the C-terminus is deglutamylated by AGTPBP1/CCP1, AGBL1/CCP4 and AGBL4/CCP6, leading to the formation of Myosin light chain kinase, smooth muscle, deglutamylated form. The consequences of C-terminal deglutamylation are unknown. In terms of processing, can probably be down-regulated by phosphorylation. Tyrosine phosphorylation by ABL1 increases kinase activity, reverses MLCK-mediated inhibition of Arp2/3-mediated actin polymerization, and enhances CTTN-binding. Phosphorylation by SRC promotes CTTN binding.

Its subcellular location is the cytoplasm. It is found in the cell projection. It localises to the lamellipodium. The protein localises to the cleavage furrow. The protein resides in the cytoskeleton. Its subcellular location is the stress fiber. The enzyme catalyses L-seryl-[myosin light chain] + ATP = O-phospho-L-seryl-[myosin light chain] + ADP + H(+). It carries out the reaction L-threonyl-[myosin light chain] + ATP = O-phospho-L-threonyl-[myosin light chain] + ADP + H(+). Calcium/calmodulin-dependent myosin light chain kinase implicated in smooth muscle contraction via phosphorylation of myosin light chains (MLC). Also regulates actin-myosin interaction through a non-kinase activity. Phosphorylates PTK2B/PYK2 and myosin light-chains. Involved in the inflammatory response (e.g. apoptosis, vascular permeability, leukocyte diapedesis), cell motility and morphology, airway hyperreactivity and other activities relevant to asthma. Required for tonic airway smooth muscle contraction that is necessary for physiological and asthmatic airway resistance. Necessary for gastrointestinal motility. Implicated in the regulation of endothelial as well as vascular permeability, probably via the regulation of cytoskeletal rearrangements. In the nervous system it has been shown to control the growth initiation of astrocytic processes in culture and to participate in transmitter release at synapses formed between cultured sympathetic ganglion cells. Critical participant in signaling sequences that result in fibroblast apoptosis. Plays a role in the regulation of epithelial cell survival. Required for epithelial wound healing, especially during actomyosin ring contraction during purse-string wound closure. Mediates RhoA-dependent membrane blebbing. Triggers TRPC5 channel activity in a calcium-dependent signaling, by inducing its subcellular localization at the plasma membrane. Promotes cell migration (including tumor cells) and tumor metastasis. PTK2B/PYK2 activation by phosphorylation mediates ITGB2 activation and is thus essential to trigger neutrophil transmigration during acute lung injury (ALI). May regulate optic nerve head astrocyte migration. Probably involved in mitotic cytoskeletal regulation. Regulates tight junction probably by modulating ZO-1 exchange in the perijunctional actomyosin ring. Mediates burn-induced microvascular barrier injury; triggers endothelial contraction in the development of microvascular hyperpermeability by phosphorylating MLC. Essential for intestinal barrier dysfunction. Mediates Giardia spp.-mediated reduced epithelial barrier function during giardiasis intestinal infection via reorganization of cytoskeletal F-actin and tight junctional ZO-1. Necessary for hypotonicity-induced Ca(2+) entry and subsequent activation of volume-sensitive organic osmolyte/anion channels (VSOAC) in cervical cancer cells. This Ovis aries (Sheep) protein is Myosin light chain kinase, smooth muscle (MYLK).